The chain runs to 135 residues: Large ribosomal subunit protein bL21 (135 aa).

The segment covering 109-128 has biased composition (polar residues); that stretch reads TLATAQSAPPSTSEATTDTT. The disordered stretch occupies residues 109-135; sequence TLATAQSAPPSTSEATTDTTGIPAAEE.

This sequence belongs to the bacterial ribosomal protein bL21 family. In terms of assembly, part of the 50S ribosomal subunit. Contacts protein L20.

Its function is as follows. This protein binds to 23S rRNA in the presence of protein L20. This chain is Large ribosomal subunit protein bL21, found in Synechococcus sp. (strain JA-3-3Ab) (Cyanobacteria bacterium Yellowstone A-Prime).